The following is a 95-amino-acid chain: Putative RelE-like toxin protein (95 aa).

This sequence belongs to the RelE toxin family.

Its function is as follows. Toxic component of a type II toxin-antitoxin (TA) system. The sequence is that of Putative RelE-like toxin protein from Escherichia coli.